The sequence spans 29 residues: Cycloviolacin-O21 (29 aa).

Positions 1–29 (GLPVCGETCVTGSCYTPGCTCSWPVCTRN) form a cross-link, cyclopeptide (Gly-Asn). Disulfide bonds link Cys-5–Cys-19, Cys-9–Cys-21, and Cys-14–Cys-26.

Post-translationally, this is a cyclic peptide. As to expression, expressed in leaves, petals, petioles, and runners but not in roots (at protein level).

Functionally, probably participates in a plant defense mechanism. The polypeptide is Cycloviolacin-O21 (Viola odorata (Sweet violet)).